A 291-amino-acid polypeptide reads, in one-letter code: Small ribosomal subunit protein uS2 (291 aa).

It belongs to the universal ribosomal protein uS2 family.

The polypeptide is Small ribosomal subunit protein uS2 (Orientia tsutsugamushi (strain Boryong) (Rickettsia tsutsugamushi)).